Here is a 230-residue protein sequence, read N- to C-terminus: CRP-like protein Clp (230 aa).

A nucleoside 3',5'-cyclic phosphate is bound at residue 18–139 (PSLALDAGTI…APKILYAIGV (122 aa)). The HTH crp-type domain occupies 158–230 (LDVTDRIVRT…GKTVVLYGTR (73 aa)). Residues 190–209 (RQELARLVGCSREMAGRVLK) constitute a DNA-binding region (H-T-H motif).

In terms of assembly, homodimer.

The protein resides in the cytoplasm. With respect to regulation, allosterically inhibited by cyclic di-GMP (c-di-GMP), which binds to Clp and abolishes its ability to bind its target gene promoter. Global transcriptional regulator that regulates virulence factors production by activating or repressing the expression of a large set of genes in diffusible signal factor (DSF) pathway. This chain is CRP-like protein Clp (clp), found in Xanthomonas oryzae pv. oryzae (strain MAFF 311018).